The chain runs to 386 residues: MDLDLERGPPGPRRPPRGPPLSSSIGLALLLLLLALLFWLYIIMSNWTGGALLVLYAFALMLVIIILIIFIFRRDLLCPLGALCLLLLMITLLLIALWNLHGQALYLGIVLFIFGCLLVLGLWIYLLEILWRLGATIWQLLAFFLAFFLDIILLIIALYLQQNWWTLLVDLLWLLLFLAILIWMYYHGQRHSDEHHHDDSLPHPQQATDDSSNQSDSNSNEGRHLLLVSGAGDGPPLCSQNLGAPGGGPNNGPQDPDNTDDNGPQDPDNTDDNGPHDPLPQDPDNTDDNGPQDPDNTDDNGPHDPLPHNPSDSAGNDGGPPQLTEEVENKGGDQGPPLMTDGGGGHSHDSGHDGIDPHLPTLLLGTSGSGGDDDDPHGPVQLSYYD.

Residues 2–23 (DLDLERGPPGPRRPPRGPPLSS) lie on the Cytoplasmic side of the membrane. A helical transmembrane segment spans residues 24–44 (SIGLALLLLLLALLFWLYIIM). The Extracellular portion of the chain corresponds to 45–51 (SNWTGGA). A helical transmembrane segment spans residues 52 to 72 (LLVLYAFALMLVIIILIIFIF). Residues 73–75 (RRD) lie on the Cytoplasmic side of the membrane. The chain crosses the membrane as a helical span at residues 76–96 (LLCPLGALCLLLLMITLLLIA). Over 97-106 (LWNLHGQALY) the chain is Extracellular. The helical transmembrane segment at 107–127 (LGIVLFIFGCLLVLGLWIYLL) threads the bilayer. Topologically, residues 128-139 (EILWRLGATIWQ) are cytoplasmic. The chain crosses the membrane as a helical span at residues 140–160 (LLAFFLAFFLDIILLIIALYL). Over 161 to 163 (QQN) the chain is Extracellular. The chain crosses the membrane as a helical span at residues 164–184 (WWTLLVDLLWLLLFLAILIWM). Residues 185–386 (YYHGQRHSDE…HGPVQLSYYD (202 aa)) are Cytoplasmic-facing. The CTAR1 stretch occupies residues 194 to 232 (EHHHDDSLPHPQQATDDSSNQSDSNSNEGRHLLLVSGAG). A disordered region spans residues 194–386 (EHHHDDSLPH…HGPVQLSYYD (193 aa)). Composition is skewed to low complexity over residues 209–220 (DDSSNQSDSNSN) and 251–267 (NGPQ…PQDP). The tract at residues 342-386 (GGGGHSHDSGHDGIDPHLPTLLLGTSGSGGDDDDPHGPVQLSYYD) is CTAR2. A compositionally biased stretch (basic and acidic residues) spans 346 to 356 (HSHDSGHDGID). Low complexity predominate over residues 357–366 (PHLPTLLLGT).

The protein belongs to the herpesviridae LMP-1 family. As to quaternary structure, interacts (via PXQXT motif) with host tumor necrosis factor receptor-associated factor (TRAF) proteins TRAF1, TRAF2, TRAF3 and TRAF5. Interacts with TRAF3; this interaction activates B lymphocytes. Interacts with human protein ZMYND11; leading to negatively regulate NF-kappa-B activation. Interacts with host UBE2I; this interaction induces the sumoylation of various cellular proteins. Interacts with host IRF7. Interacts with host TYK2. In terms of processing, ubiquitinated on the N-terminus.

It is found in the host cell membrane. Functionally, acts as a CD40 functional homolog to prevent apoptosis of infected B-lymphocytes and drive their proliferation. Functions as a constitutively active tumor necrosis factor receptor that induces the activation of several signaling pathways, including those of the NF-kappa-B family. LMP1 signaling leads to up-regulation of antiapoptotic proteins and provide growth signals in latently infected cells. Interacts with host UBE2I and subsequently affects the sumoylation state of several cellular proteins. For example, induces the sumoylation of host IRF7 thereby limiting its transcriptional activity and modulating the activation of innate immune responses. Also inhibits host IFN-alpha-stimulated STAT2 nuclear translocation and interferon-stimulated response element transcriptional activity by interacting with and inhibiting host TYK2. Induces SUMO expression during viral latency thereby dysregulating the host sumoylation processes. The polypeptide is Latent membrane protein 1 (LMP1) (Homo sapiens (Human)).